The following is a 380-amino-acid chain: Cytochrome b (380 aa).

4 helical membrane-spanning segments follow: residues 33–53, 77–98, 113–133, and 178–198; these read FGSL…FLAM, WLIR…FIHV, WNIG…GYVL, and FFAF…VHLL. Positions 83 and 97 each coordinate heme b. Heme b-binding residues include His182 and His196. His201 serves as a coordination point for a ubiquinone. The next 4 helical transmembrane spans lie at 226–246, 288–308, 320–340, and 347–367; these read IKDL…VLFF, LGGV…PLLN, ITQV…XXXX, and XXXX…IFMP.

Belongs to the cytochrome b family. As to quaternary structure, the cytochrome bc1 complex contains 11 subunits: 3 respiratory subunits (MT-CYB, CYC1 and UQCRFS1), 2 core proteins (UQCRC1 and UQCRC2) and 6 low-molecular weight proteins (UQCRH/QCR6, UQCRB/QCR7, UQCRQ/QCR8, UQCR10/QCR9, UQCR11/QCR10 and a cleavage product of UQCRFS1). This cytochrome bc1 complex then forms a dimer. The cofactor is heme b.

Its subcellular location is the mitochondrion inner membrane. In terms of biological role, component of the ubiquinol-cytochrome c reductase complex (complex III or cytochrome b-c1 complex) that is part of the mitochondrial respiratory chain. The b-c1 complex mediates electron transfer from ubiquinol to cytochrome c. Contributes to the generation of a proton gradient across the mitochondrial membrane that is then used for ATP synthesis. In Rhipidomys leucodactylus (White-footed climbing mouse), this protein is Cytochrome b (MT-CYB).